Consider the following 244-residue polypeptide: Large ribosomal subunit protein uL3 (244 aa).

The protein belongs to the universal ribosomal protein uL3 family. In terms of assembly, part of the 50S ribosomal subunit. Forms a cluster with proteins L14 and L19.

In terms of biological role, one of the primary rRNA binding proteins, it binds directly near the 3'-end of the 23S rRNA, where it nucleates assembly of the 50S subunit. The chain is Large ribosomal subunit protein uL3 from Aquifex pyrophilus.